The chain runs to 236 residues: Large ribosomal subunit protein uL3 (236 aa).

The protein belongs to the universal ribosomal protein uL3 family. Part of the 50S ribosomal subunit. Forms a cluster with proteins L14 and L19.

Functionally, one of the primary rRNA binding proteins, it binds directly near the 3'-end of the 23S rRNA, where it nucleates assembly of the 50S subunit. In Anaeromyxobacter dehalogenans (strain 2CP-1 / ATCC BAA-258), this protein is Large ribosomal subunit protein uL3.